The chain runs to 409 residues: Elongation factor Tu, chloroplastic (409 aa).

Residues 10–214 (KPHVNIGTIG…AVDEYIPTPE (205 aa)) form the tr-type G domain. Positions 19-26 (GHVDHGKT) are G1. Residue 19-26 (GHVDHGKT) coordinates GTP. T26 contacts Mg(2+). A G2 region spans residues 60-64 (GITIN). Residues 81 to 84 (DCPG) are G3. Residues 81 to 85 (DCPGH) and 136 to 139 (NKED) contribute to the GTP site. Residues 136–139 (NKED) form a G4 region. Residues 174–176 (SAL) are G5.

This sequence belongs to the TRAFAC class translation factor GTPase superfamily. Classic translation factor GTPase family. EF-Tu/EF-1A subfamily.

It is found in the plastid. The protein resides in the chloroplast. The catalysed reaction is GTP + H2O = GDP + phosphate + H(+). Its function is as follows. GTP hydrolase that promotes the GTP-dependent binding of aminoacyl-tRNA to the A-site of ribosomes during protein biosynthesis. The sequence is that of Elongation factor Tu, chloroplastic (tufA) from Trieres chinensis (Marine centric diatom).